The sequence spans 122 residues: Large ribosomal subunit protein bL12 (122 aa).

It belongs to the bacterial ribosomal protein bL12 family. Homodimer. Part of the ribosomal stalk of the 50S ribosomal subunit. Forms a multimeric L10(L12)X complex, where L10 forms an elongated spine to which 2 to 4 L12 dimers bind in a sequential fashion. Binds GTP-bound translation factors.

Functionally, forms part of the ribosomal stalk which helps the ribosome interact with GTP-bound translation factors. Is thus essential for accurate translation. The sequence is that of Large ribosomal subunit protein bL12 from Vibrio parahaemolyticus serotype O3:K6 (strain RIMD 2210633).